We begin with the raw amino-acid sequence, 644 residues long: uncharacterized protein (644 aa).

The interval 1 to 39 (MKANGLDNDPARTRMERTDIDSEHPEAQPLLNNNHRTLG) is disordered. The Cytoplasmic portion of the chain corresponds to 1–90 (MKANGLDNDP…ILNILILINT (90 aa)). Over residues 9–26 (DPARTRMERTDIDSEHPE) the composition is skewed to basic and acidic residues. Phosphoserine occurs at positions 22, 56, and 63. Residues 91–111 (IWLVTTLISDFFFNINILFGF) form a helical membrane-spanning segment. The Vacuolar portion of the chain corresponds to 112 to 122 (SNRYASFNDLT). A helical transmembrane segment spans residues 123 to 143 (LIFISIIANSFNLWFNKLGLY). The Cytoplasmic segment spans residues 144 to 147 (SALD). The helical transmembrane segment at 148–168 (YSLNVTLCVLTLFNLALTYLI) threads the bilayer. Residues 169 to 174 (KYTRQR) are Vacuolar-facing. A helical membrane pass occupies residues 175 to 195 (IGFVGTFTYLWTSFSFFIGAI). Residues 196–271 (LDWYLLFYNN…EWVSIGFRNT (76 aa)) lie on the Cytoplasmic side of the membrane. Residues 225–251 (NENHTNSTENRDRSQYGSGSPTPTHRS) are disordered. Positions 239–251 (QYGSGSPTPTHRS) are enriched in polar residues. Ser244 carries the phosphoserine modification. Residues 272–292 (IKFLILIFFALFTLNTLLTTL) form a helical membrane-spanning segment. The Vacuolar portion of the chain corresponds to 293–644 (DTYRLTHKLP…IGELGKLTED (352 aa)). In terms of domain architecture, AB hydrolase-1 spans 348-619 (PIILFEHGGY…IVEGGHEIYK (272 aa)). Residues 469 to 492 (GRGDGDDGDDGNGNDGDGRNHDKT) are disordered.

It is found in the vacuole membrane. This is an uncharacterized protein from Saccharomyces cerevisiae (strain YJM789) (Baker's yeast).